The following is a 241-amino-acid chain: 1-(5-phosphoribosyl)-5-[(5-phosphoribosylamino)methylideneamino] imidazole-4-carboxamide isomerase (241 aa).

The active-site Proton acceptor is aspartate 10. Residue aspartate 131 is the Proton donor of the active site.

It belongs to the HisA/HisF family.

It localises to the cytoplasm. The catalysed reaction is 1-(5-phospho-beta-D-ribosyl)-5-[(5-phospho-beta-D-ribosylamino)methylideneamino]imidazole-4-carboxamide = 5-[(5-phospho-1-deoxy-D-ribulos-1-ylimino)methylamino]-1-(5-phospho-beta-D-ribosyl)imidazole-4-carboxamide. It functions in the pathway amino-acid biosynthesis; L-histidine biosynthesis; L-histidine from 5-phospho-alpha-D-ribose 1-diphosphate: step 4/9. This is 1-(5-phosphoribosyl)-5-[(5-phosphoribosylamino)methylideneamino] imidazole-4-carboxamide isomerase from Hyphomonas neptunium (strain ATCC 15444).